A 408-amino-acid polypeptide reads, in one-letter code: Imidazolonepropionase (408 aa).

Fe(3+) is bound by residues His-73 and His-75. Zn(2+) contacts are provided by His-73 and His-75. The 4-imidazolone-5-propanoate site is built by Arg-82, Tyr-145, and His-178. Tyr-145 is a binding site for N-formimidoyl-L-glutamate. His-243 is a binding site for Fe(3+). His-243 contacts Zn(2+). Gln-246 is a 4-imidazolone-5-propanoate binding site. Asp-318 provides a ligand contact to Fe(3+). Residue Asp-318 coordinates Zn(2+). The N-formimidoyl-L-glutamate site is built by Asn-320 and Gly-322. Ser-323 is a binding site for 4-imidazolone-5-propanoate.

It belongs to the metallo-dependent hydrolases superfamily. HutI family. Requires Zn(2+) as cofactor. Fe(3+) serves as cofactor.

The protein localises to the cytoplasm. The enzyme catalyses 4-imidazolone-5-propanoate + H2O = N-formimidoyl-L-glutamate. It participates in amino-acid degradation; L-histidine degradation into L-glutamate; N-formimidoyl-L-glutamate from L-histidine: step 3/3. Catalyzes the hydrolytic cleavage of the carbon-nitrogen bond in imidazolone-5-propanoate to yield N-formimidoyl-L-glutamate. It is the third step in the universal histidine degradation pathway. The protein is Imidazolonepropionase of Shewanella loihica (strain ATCC BAA-1088 / PV-4).